The primary structure comprises 688 residues: PR domain zinc finger protein 8 (688 aa).

An SET domain is found at 16–131; that stretch reads KAVQQCLTDI…KDEELLVWYG (116 aa). S-adenosyl-L-methionine is bound at residue Tyr-130. The segment at 154-182 adopts a C2H2-type 1 zinc-finger fold; sequence YTCLECSQRFQFEFPYVAHLRFRCPKRLH. Disordered stretches follow at residues 184-309 and 397-506; these read TDAN…GCKG and EEAA…PARS. Residues 192 to 208 show a composition bias toward gly residues; sequence QGGGLGTKDHGGGGGGK. Low complexity-rich tracts occupy residues 209 to 219 and 275 to 284; these read EQQQQQQQQQQ and GSSSCVAAPG. 2 stretches are compositionally biased toward gly residues: residues 414–424 and 470–489; these read AGGGVAGGGSN and LGGG…GGGQ. 2 C2H2-type zinc fingers span residues 624-647 and 665-687; these read NWCA…RSHH and LKCP…MTSH.

Belongs to the class V-like SAM-binding methyltransferase superfamily. Interacts with BHLHE22. Interacts with EPM2A and NHLRC1. This interaction sequesters EPM2A and NHLRC1 to the nucleus. As to expression, expressed in brain, heart, liver, testes, retina. Highest expression is observed in the retina and hippocampus; moderately expressed in the cortex and cerebellum. In the retina, it is expressed in bipolar and amacrine cells.

The protein resides in the nucleus. Probable histone methyltransferase, preferentially acting on 'Lys-9' of histone H3. Histone methyltransferase activity has not been confirmed in other species. Involved in the control of steroidogenesis through transcriptional repression of steroidogenesis marker genes such as CYP17A1 and LHCGR. Forms with BHLHE22 a transcriptional repressor complex controlling genes involved in neural development and neuronal differentiation. In the retina, it is required for rod bipolar and type 2 OFF-cone bipolar cell survival. This is PR domain zinc finger protein 8 (Prdm8) from Mus musculus (Mouse).